A 51-amino-acid polypeptide reads, in one-letter code: Insulin (51 aa).

3 cysteine pairs are disulfide-bonded: Cys7–Cys37, Cys19–Cys50, and Cys36–Cys41.

This sequence belongs to the insulin family. As to quaternary structure, heterodimer of a B chain and an A chain linked by two disulfide bonds.

The protein resides in the secreted. Insulin decreases blood glucose concentration. It increases cell permeability to monosaccharides, amino acids and fatty acids. It accelerates glycolysis, the pentose phosphate cycle, and glycogen synthesis in liver. The polypeptide is Insulin (INS) (Balaenoptera borealis (Sei whale)).